Reading from the N-terminus, the 383-residue chain is Sulfate adenylyltransferase (383 aa).

This sequence belongs to the sulfate adenylyltransferase family.

It carries out the reaction sulfate + ATP + H(+) = adenosine 5'-phosphosulfate + diphosphate. Its pathway is sulfur metabolism; hydrogen sulfide biosynthesis; sulfite from sulfate: step 1/3. The chain is Sulfate adenylyltransferase (sat) from Aeropyrum pernix (strain ATCC 700893 / DSM 11879 / JCM 9820 / NBRC 100138 / K1).